Consider the following 197-residue polypeptide: Xanthine phosphoribosyltransferase (197 aa).

Residues Leu-20 and Thr-27 each contribute to the xanthine site. 128–132 (ANGQA) contacts 5-phospho-alpha-D-ribose 1-diphosphate. Lys-156 contributes to the xanthine binding site.

It belongs to the purine/pyrimidine phosphoribosyltransferase family. Xpt subfamily. As to quaternary structure, homodimer.

The protein resides in the cytoplasm. The catalysed reaction is XMP + diphosphate = xanthine + 5-phospho-alpha-D-ribose 1-diphosphate. It participates in purine metabolism; XMP biosynthesis via salvage pathway; XMP from xanthine: step 1/1. Converts the preformed base xanthine, a product of nucleic acid breakdown, to xanthosine 5'-monophosphate (XMP), so it can be reused for RNA or DNA synthesis. This is Xanthine phosphoribosyltransferase from Lactococcus lactis subsp. cremoris (strain SK11).